We begin with the raw amino-acid sequence, 217 residues long: IMPACT family member YvyE (217 aa).

This sequence belongs to the IMPACT family.

This is IMPACT family member YvyE (yvyE) from Bacillus subtilis (strain 168).